The chain runs to 211 residues: Pyridoxine/pyridoxamine 5'-phosphate oxidase (211 aa).

Residues 7-10 (RTDY) and Lys-65 each bind substrate. FMN is bound by residues 60–65 (RIVLIK), 75–76 (FT), Arg-81, and Lys-82. Residues Tyr-122, Arg-126, and Ser-130 each coordinate substrate. Residues 139–140 (QS) and Trp-183 contribute to the FMN site. 189–191 (RLH) contacts substrate. Residue Arg-193 participates in FMN binding.

This sequence belongs to the pyridoxamine 5'-phosphate oxidase family. Homodimer. FMN is required as a cofactor.

It carries out the reaction pyridoxamine 5'-phosphate + O2 + H2O = pyridoxal 5'-phosphate + H2O2 + NH4(+). The enzyme catalyses pyridoxine 5'-phosphate + O2 = pyridoxal 5'-phosphate + H2O2. Its pathway is cofactor metabolism; pyridoxal 5'-phosphate salvage; pyridoxal 5'-phosphate from pyridoxamine 5'-phosphate: step 1/1. It functions in the pathway cofactor metabolism; pyridoxal 5'-phosphate salvage; pyridoxal 5'-phosphate from pyridoxine 5'-phosphate: step 1/1. In terms of biological role, catalyzes the oxidation of either pyridoxine 5'-phosphate (PNP) or pyridoxamine 5'-phosphate (PMP) into pyridoxal 5'-phosphate (PLP). In Herminiimonas arsenicoxydans, this protein is Pyridoxine/pyridoxamine 5'-phosphate oxidase.